Here is a 433-residue protein sequence, read N- to C-terminus: tRNA-2-methylthio-N(6)-dimethylallyladenosine synthase (433 aa).

The MTTase N-terminal domain occupies 3 to 118 (KKLFIQTLGC…ISTAVKTPKF (116 aa)). 6 residues coordinate [4Fe-4S] cluster: C12, C49, C81, C150, C154, and C157. The Radical SAM core domain occupies 136 to 369 (RGSPYKSHIN…QSRHNEILDE (234 aa)). A TRAM domain is found at 372-433 (AAQEGKILDV…RMVLYGELAN (62 aa)).

Belongs to the methylthiotransferase family. MiaB subfamily. In terms of assembly, monomer. The cofactor is [4Fe-4S] cluster.

The protein resides in the cytoplasm. It catalyses the reaction N(6)-dimethylallyladenosine(37) in tRNA + (sulfur carrier)-SH + AH2 + 2 S-adenosyl-L-methionine = 2-methylsulfanyl-N(6)-dimethylallyladenosine(37) in tRNA + (sulfur carrier)-H + 5'-deoxyadenosine + L-methionine + A + S-adenosyl-L-homocysteine + 2 H(+). Functionally, catalyzes the methylthiolation of N6-(dimethylallyl)adenosine (i(6)A), leading to the formation of 2-methylthio-N6-(dimethylallyl)adenosine (ms(2)i(6)A) at position 37 in tRNAs that read codons beginning with uridine. This chain is tRNA-2-methylthio-N(6)-dimethylallyladenosine synthase, found in Campylobacter curvus (strain 525.92).